The primary structure comprises 152 residues: MFRGATLVNLDSKGRLSVPTRYRDQLIENASGQMVCTIDINHPCLLLYTLPEWEIIEQKLSRLSSMNPQERRVQRLLLGHASECQMDNSGRLLIAPVLRQHAGLTKEVMLVGQFNKFELWDETTWYQQVKEDIDAEQSDSGVLSDRLQDLSL.

2 SpoVT-AbrB domains span residues 5–52 (ATLV…TLPE) and 81–124 (ASEC…DETT).

Belongs to the MraZ family. As to quaternary structure, forms oligomers.

Its subcellular location is the cytoplasm. It is found in the nucleoid. In terms of biological role, negatively regulates its own expression and that of the subsequent genes in the proximal part of the division and cell wall (dcw) gene cluster. Acts by binding directly to DNA. May also regulate the expression of genes outside the dcw cluster. The chain is Transcriptional regulator MraZ from Enterobacter sp. (strain 638).